The following is a 481-amino-acid chain: Rhamnogalacturonan I rhamnosyltransferase 4 (481 aa).

Residues 33 to 55 traverse the membrane as a helical; Signal-anchor for type II membrane protein segment; sequence VWFFRVCSCILVWTCLIQLFWHS. N-linked (GlcNAc...) asparagine glycans are attached at residues Asn85 and Asn118. 258-260 contacts substrate; sequence HLR. N-linked (GlcNAc...) asparagine glycosylation is found at Asn372 and Asn432.

It belongs to the glycosyltransferase GT106 family.

It is found in the golgi apparatus membrane. It catalyses the reaction alpha-D-galacturonosyl-[(1-&gt;2)-alpha-L-rhamnosyl-(1-&gt;4)-alpha-D-galacturonosyl](n) + UDP-beta-L-rhamnose = [(1-&gt;2)-alpha-L-rhamnosyl-(1-&gt;4)-alpha-D-galacturonosyl](n+1) + UDP + H(+). The protein operates within glycan metabolism; pectin biosynthesis. In terms of biological role, glycosyltransferase involved in the formation of rhamnogalacturonan I (RG-I) oligosaccharides in the seed coat mucilage, which is a specialized cell wall with abundant RG-I. Transfers the rhamnose residue from UDP-beta-L-rhamnose to RG-I oligosaccharides. This chain is Rhamnogalacturonan I rhamnosyltransferase 4, found in Arabidopsis thaliana (Mouse-ear cress).